Consider the following 279-residue polypeptide: Monoacylglycerol lipase (279 aa).

Residue S110 is the Nucleophile of the active site. Residues D226 and H256 each act as charge relay system in the active site.

Belongs to the AB hydrolase superfamily. In terms of assembly, monomer.

The protein resides in the secreted. Its subcellular location is the cell wall. It catalyses the reaction a 1-acylglycerol + H2O = glycerol + a fatty acid + H(+). It carries out the reaction Hydrolyzes glycerol monoesters of long-chain fatty acids.. The catalysed reaction is 1-butyrylglycerol + H2O = butanoate + glycerol + H(+). The enzyme catalyses 1-octanoylglycerol + H2O = octanoate + glycerol + H(+). It catalyses the reaction 1-decanoylglycerol + H2O = decanoate + glycerol + H(+). It carries out the reaction 1-dodecanoylglycerol + H2O = dodecanoate + glycerol + H(+). The catalysed reaction is 1-tetradecanoylglycerol + H2O = tetradecanoate + glycerol + H(+). The enzyme catalyses 1-(9Z-octadecenoyl)-glycerol + H2O = glycerol + (9Z)-octadecenoate + H(+). It catalyses the reaction 2-(9Z-octadecenoyl)-glycerol + H2O = glycerol + (9Z)-octadecenoate + H(+). With respect to regulation, inhibited by the serine esterase inhibitors PMSF (100%), E600 (80%) and THL (22%). Virtual screening identified a tautomer of ZINC13451138, known inhibitor for HIV-1 integrase, as a potential inhibitor. Its function is as follows. Involved in the hydrolysis of exogenous host lipids during chronic infection. Catalyzes the hydrolysis of both monoacylglycerols (MAG) and diacylglycerols (DAG), with a preference for MAG. It hydrolyzes 2-MAG, 1-3-MAG and MAG with short, medium and long chain fatty acids such as 1-monobutyroyl-rac-glycerol (MC4), 1-mono-octanoyl-rac-glycerol (MC8), 1-monodecanoyl-rac-glycerol (MC10), 1-monolauroyl-rac-glycerol (MC12), 1-monomyristoyl-rac-glycerol (MC14) and 1-mono-oleyl-rac-glycerol (MC18:1). Also able to hydrolyze DAG with short (DiC6) and medium (DiC10) fatty acid chains, but not with longest fatty acid chains. Can also hydrolyze vinyl laurate (VC12), vinyl butyrate (VC4) and vinyl propionate (VC3). In terms of biological role, induces an inflammatory response and cell apoptosis in the host cells. Increases expression of IL-6, NF-kappaB, TLR-2, TLR-6, TNF-alpha, and MyD88 in mouse alveolar macrophage RAW264.7 cells. Persistent expression induces RAW264.7 cell apoptosis in vitro. In Mycobacterium tuberculosis (strain ATCC 25618 / H37Rv), this protein is Monoacylglycerol lipase.